Here is a 335-residue protein sequence, read N- to C-terminus: Probable magnesium transporter NIPA1 (335 aa).

Residues methionine 1–aspartate 7 lie on the Extracellular side of the membrane. The helical transmembrane segment at asparagine 8–isoleucine 28 threads the bilayer. At lysine 29–tryptophan 55 the chain is on the cytoplasmic side. Residues tryptophan 56 to phenylalanine 76 form a helical membrane-spanning segment. Over alanine 77–alanine 79 the chain is Extracellular. The helical transmembrane segment at isoleucine 80 to isoleucine 100 threads the bilayer. The Cytoplasmic portion of the chain corresponds to leucine 101–lysine 104. Residues leucine 105–leucine 125 form a helical membrane-spanning segment. The Extracellular portion of the chain corresponds to histidine 126 to alanine 143. A helical membrane pass occupies residues isoleucine 144–phenylalanine 164. Residues tyrosine 165–valine 179 are Cytoplasmic-facing. A helical transmembrane segment spans residues glycine 180–isoleucine 200. Topologically, residues lysine 201–tyrosine 212 are extracellular. A helical transmembrane segment spans residues phenylalanine 213 to leucine 233. Over asparagine 234–valine 244 the chain is Cytoplasmic. Residues isoleucine 245–phenylalanine 265 traverse the membrane as a helical segment. The Extracellular segment spans residues lysine 266–serine 272. Residues glycine 273 to leucine 293 form a helical membrane-spanning segment. Residues histidine 294–serine 335 lie on the Cytoplasmic side of the membrane. Polar residues predominate over residues alanine 303–asparagine 321. The tract at residues alanine 303 to serine 335 is disordered. Residues serine 322 to serine 335 are compositionally biased toward low complexity.

The protein belongs to the NIPA (TC 2.A.7) family. Homodimer.

It is found in the cell membrane. The protein localises to the early endosome. Acts as a Mg(2+) transporter. Can also transport other divalent cations such as Fe(2+), Sr(2+), Ba(2+), Mn(2+) and Co(2+) but to a much less extent than Mg(2+). The chain is Probable magnesium transporter NIPA1 from Arabidopsis thaliana (Mouse-ear cress).